The sequence spans 276 residues: MALLDLCGAPRGQRPEWAAVDAGSGLRSDPGHYSFSVQAPELALPRGMQPTEFLRSFGDDQERKVQIEMAHGTTTLAFKFQHGVIVAVDSRASAGSYIATIRVNKVIEINPYLLGTMSGCAADCQYWERLLAKECRLYYLRNGERISVSAASKLLSNMMLQYRGMGLSMGSMICGWDKKGPGLYYVDDNGTRLSGQMFSTGSGNTYAYGVMDSGYRQDLSPEEAYDLARRAIVYATHRDSYSGGVVNMYHMKKDGWVKVESTDVSDLLHKYREATL.

The propeptide at 1-72 is removed in mature form; sequence MALLDLCGAP…RKVQIEMAHG (72 aa). Threonine 73 acts as the Nucleophile in catalysis.

The protein belongs to the peptidase T1B family. In terms of assembly, the 26S proteasome consists of a 20S proteasome core and two 19S regulatory subunits. The 20S proteasome core is composed of 28 subunits that are arranged in four stacked rings, resulting in a barrel-shaped structure. The two end rings are each formed by seven alpha subunits, and the two central rings are each formed by seven beta subunits. The catalytic chamber with the active sites is on the inside of the barrel. Component of the immunoproteasome, where it displaces the equivalent housekeeping subunit PSMB5. Component of the spermatoproteasome, a form of the proteasome specifically found in testis. Directly interacts with POMP. Interacts with TAP1. Autocleaved. The resulting N-terminal Thr residue of the mature subunit is responsible for the nucleophile proteolytic activity.

It is found in the cytoplasm. The protein localises to the nucleus. The catalysed reaction is Cleavage of peptide bonds with very broad specificity.. Its function is as follows. The proteasome is a multicatalytic proteinase complex which is characterized by its ability to cleave peptides with Arg, Phe, Tyr, Leu, and Glu adjacent to the leaving group at neutral or slightly basic pH. The proteasome has an ATP-dependent proteolytic activity. This subunit is involved in antigen processing to generate class I binding peptides. May participate in the generation of spliced peptides resulting from the ligation of two separate proteasomal cleavage products that are not contiguous in the parental protein. Required for adipocyte differentiation. This is Proteasome subunit beta type-8 (Psmb8) from Rattus norvegicus (Rat).